Reading from the N-terminus, the 145-residue chain is Ribonuclease H (145 aa).

Positions 2 to 143 constitute an RNase H type-1 domain; it reads SKKEVAIYTD…ADSLARKAII (142 aa). 4 residues coordinate Mg(2+): aspartate 11, glutamate 49, aspartate 71, and aspartate 135.

It belongs to the RNase H family. Monomer. It depends on Mg(2+) as a cofactor.

It localises to the cytoplasm. It carries out the reaction Endonucleolytic cleavage to 5'-phosphomonoester.. Its function is as follows. Endonuclease that specifically degrades the RNA of RNA-DNA hybrids. In Wolbachia sp. subsp. Drosophila simulans (strain wRi), this protein is Ribonuclease H.